The chain runs to 366 residues: Fe-S cluster assembly protein DRE2 (366 aa).

Residues 8–167 (AQGSGRFLLL…KPDFGAQQAV (160 aa)) form an N-terminal SAM-like domain region. Positions 100–136 (RNRDNQIWGSGSDSAAGLGSSDGGGGGGGGEKKSSSE) are disordered. A compositionally biased stretch (low complexity) spans 108–118 (GSGSDSAAGLG). Gly residues predominate over residues 119–128 (SSDGGGGGGG). The tract at residues 168-258 (PLKLGRKKNL…EEELLGEFDM (91 aa)) is linker. [2Fe-2S] cluster is bound by residues cysteine 268, cysteine 279, cysteine 282, and cysteine 284. Residues 268 to 284 (CRPKAGKRRRACKDCTC) are fe-S binding site A. 4 residues coordinate [4Fe-4S] cluster: cysteine 329, cysteine 332, cysteine 340, and cysteine 343. Short sequence motifs (cx2C motif) lie at residues 329 to 332 (CGNC) and 340 to 343 (CDGC). A fe-S binding site B region spans residues 329–343 (CGNCALGDAFRCDGC).

Belongs to the anamorsin family. As to quaternary structure, monomer. Interacts with TAH18. Interacts with MIA40. The cofactor is [2Fe-2S] cluster. It depends on [4Fe-4S] cluster as a cofactor.

It is found in the cytoplasm. The protein resides in the mitochondrion intermembrane space. Its function is as follows. Component of the cytosolic iron-sulfur (Fe-S) protein assembly (CIA) machinery required for the maturation of extramitochondrial Fe-S proteins. Part of an electron transfer chain functioning in an early step of cytosolic Fe-S biogenesis, facilitating the de novo assembly of a [4Fe-4S] cluster on the scaffold complex CFD1-NBP35. Electrons are transferred to DRE2 from NADPH via the FAD- and FMN-containing protein TAH18. TAH18-DRE2 are also required for the assembly of the diferric tyrosyl radical cofactor of ribonucleotide reductase (RNR), probably by providing electrons for reduction during radical cofactor maturation in the catalytic small subunit RNR2. The sequence is that of Fe-S cluster assembly protein DRE2 from Paracoccidioides lutzii (strain ATCC MYA-826 / Pb01) (Paracoccidioides brasiliensis).